The primary structure comprises 83 residues: CLAVATA3/ESR (CLE)-related protein 20 (83 aa).

Residues 1 to 29 (MKNKNMNPSRPRLLCLIVFLFLVIVLSKA) form the signal peptide.

It belongs to the CLV3/ESR signal peptide family. As to expression, mostly expressed in roots, seedlings, leaves, flowers, stems and apex, and, to a lower extent, in siliques and pollen.

The protein resides in the secreted. It localises to the extracellular space. Functionally, extracellular signal peptide that regulates cell fate. Represses root apical meristem maintenance. Inhibits irreversibly root growth by reducing cell division rates in the root apical meristem. Regulates the transition of protophloem cells from proliferation to differentiation, thus impinging on postembryonic growth capacity of the root meristem; this signaling pathway requires CRN and CLV2. This is CLAVATA3/ESR (CLE)-related protein 20 from Arabidopsis thaliana (Mouse-ear cress).